The primary structure comprises 290 residues: 4-hydroxybenzoate octaprenyltransferase (290 aa).

9 helical membrane passes run 20–40, 43–63, 92–112, 114–131, 135–155, 160–180, 209–229, 231–251, and 266–286; these read IGILLLLWPTLWGLWLAAEGV, LDILLIFVLGTVLMRSAGCVV, EALLLAAGLSLVAFLLIQPLN, LTIELSFVALFLAASYPF, FFAMPQAYLGIAFSFGIPMAF, GEVPFPAWFLMGANLLWVIAY, VVGVVLCHMAFLAGMVAIGLL, NLGVIYYIGLATALGLILYQY, and FLHNNWVGATIFAGIVLDYLV.

This sequence belongs to the UbiA prenyltransferase family. Mg(2+) is required as a cofactor.

The protein localises to the cell inner membrane. It carries out the reaction all-trans-octaprenyl diphosphate + 4-hydroxybenzoate = 4-hydroxy-3-(all-trans-octaprenyl)benzoate + diphosphate. Its pathway is cofactor biosynthesis; ubiquinone biosynthesis. In terms of biological role, catalyzes the prenylation of para-hydroxybenzoate (PHB) with an all-trans polyprenyl group. Mediates the second step in the final reaction sequence of ubiquinone-8 (UQ-8) biosynthesis, which is the condensation of the polyisoprenoid side chain with PHB, generating the first membrane-bound Q intermediate 3-octaprenyl-4-hydroxybenzoate. This is 4-hydroxybenzoate octaprenyltransferase from Nitrosospira multiformis (strain ATCC 25196 / NCIMB 11849 / C 71).